Reading from the N-terminus, the 490-residue chain is ATP synthase subunit beta, chloroplastic (490 aa).

At Thr-6 the chain carries Phosphothreonine. At Ser-13 the chain carries Phosphoserine. 172-179 serves as a coordination point for ATP; it reads GGAGVGKT.

It belongs to the ATPase alpha/beta chains family. In terms of assembly, F-type ATPases have 2 components, CF(1) - the catalytic core - and CF(0) - the membrane proton channel. CF(1) has five subunits: alpha(3), beta(3), gamma(1), delta(1), epsilon(1). CF(0) has four main subunits: a(1), b(1), b'(1) and c(9-12).

It localises to the plastid. Its subcellular location is the chloroplast thylakoid membrane. It carries out the reaction ATP + H2O + 4 H(+)(in) = ADP + phosphate + 5 H(+)(out). Produces ATP from ADP in the presence of a proton gradient across the membrane. The catalytic sites are hosted primarily by the beta subunits. This is ATP synthase subunit beta, chloroplastic from Aethionema grandiflorum (Persian stone-cress).